We begin with the raw amino-acid sequence, 165 residues long: 6,7-dimethyl-8-ribityllumazine synthase (165 aa).

5-amino-6-(D-ribitylamino)uracil-binding positions include F22, 56-58 (SME), and 80-82 (AVI). 85–86 (ET) is a binding site for (2S)-2-hydroxy-3-oxobutyl phosphate. Residue H88 is the Proton donor of the active site. F113 contributes to the 5-amino-6-(D-ribitylamino)uracil binding site. R127 contacts (2S)-2-hydroxy-3-oxobutyl phosphate.

Belongs to the DMRL synthase family.

It catalyses the reaction (2S)-2-hydroxy-3-oxobutyl phosphate + 5-amino-6-(D-ribitylamino)uracil = 6,7-dimethyl-8-(1-D-ribityl)lumazine + phosphate + 2 H2O + H(+). Its pathway is cofactor biosynthesis; riboflavin biosynthesis; riboflavin from 2-hydroxy-3-oxobutyl phosphate and 5-amino-6-(D-ribitylamino)uracil: step 1/2. Catalyzes the formation of 6,7-dimethyl-8-ribityllumazine by condensation of 5-amino-6-(D-ribitylamino)uracil with 3,4-dihydroxy-2-butanone 4-phosphate. This is the penultimate step in the biosynthesis of riboflavin. The protein is 6,7-dimethyl-8-ribityllumazine synthase of Thermotoga sp. (strain RQ2).